An 854-amino-acid polypeptide reads, in one-letter code: Aryl hydrocarbon receptor (854 aa).

Residues 1–9 (MSSGANITY) constitute a propeptide that is removed on maturation. The disordered stretch occupies residues 1-38 (MSSGANITYASRKRRKPVQKTVKPIPAEGIKSNPSKRH). 2 consecutive short sequence motifs (nuclear localization signal) follow at residues 12–15 (RKRR) and 36–41 (KRHRDR). The bHLH domain maps to 26–79 (PAEGIKSNPSKRHRDRLNTELDRLASLLPFPQDVINKLDKLSVLRLSVSYLRAK). The tract at residues 37-65 (RHRDRLNTELDRLASLLPFPQDVINKLDK) is DNA-binding. Required for maintaining the overall integrity of the AHR:ARNT heterodimer and its transcriptional activity stretches follow at residues 49-81 (LASL…AKSF), 116-124 (LLQALNGFV), and 264-266 (FAI). Positions 63 to 71 (LDKLSVLRL) match the Nuclear export signal motif. A PAS 1 domain is found at 111 to 175 (QEGEFLLQAL…AEFQRQLHWA (65 aa)). A PAS 2 domain is found at 270-340 (LQPPSILEIR…CAESHIRMIK (71 aa)). One can recognise a PAC domain in the interval 346-387 (MTVFRLLAKHSRWRWVQSNARLIYRNGRPDYIIATQRPLTDE). The disordered stretch occupies residues 425–451 (LPIRTKSNTSRKDWAPQSTPSKDSFHP). A compositionally biased stretch (polar residues) spans 440–451 (PQSTPSKDSFHP).

As to quaternary structure, homodimer. Heterodimer; efficient DNA binding requires dimerization with another bHLH protein. Interacts with ARNT; the heterodimer ARNT:AHR binds to core DNA sequence 5'-TGCGTG-3' within the dioxin response element (DRE) of target gene promoters and activates their transcription. Binds MYBBP1A. Interacts with coactivators including SRC-1, RIP140 and NOCA7, and with the corepressor SMRT. Interacts with NEDD8 and IVNS1ABP. Interacts with BMAL1. Interacts with HSP90AB1. Interacts with TIPARP; leading to mono-ADP-ribosylation of AHR and subsequent inhibition of AHR. Mono-ADP-ribosylated, leading to inhibit transcription activator activity of AHR.

Its subcellular location is the cytoplasm. The protein resides in the nucleus. Its function is as follows. Ligand-activated transcription factor that enables cells to adapt to changing conditions by sensing compounds from the environment, diet, microbiome and cellular metabolism, and which plays important roles in development, immunity and cancer. Upon ligand binding, translocates into the nucleus, where it heterodimerizes with ARNT and induces transcription by binding to xenobiotic response elements (XRE). Regulates a variety of biological processes, including angiogenesis, hematopoiesis, drug and lipid metabolism, cell motility and immune modulation. Xenobiotics can act as ligands: upon xenobiotic-binding, activates the expression of multiple phase I and II xenobiotic chemical metabolizing enzyme genes (such as the CYP1A1 gene). Mediates biochemical and toxic effects of halogenated aromatic hydrocarbons. Next to xenobiotics, natural ligands derived from plants, microbiota, and endogenous metabolism are potent AHR agonists. Tryptophan (Trp) derivatives constitute an important class of endogenous AHR ligands. Acts as a negative regulator of anti-tumor immunity: indoles and kynurenic acid generated by Trp catabolism act as ligand and activate AHR, thereby promoting AHR-driven cancer cell motility and suppressing adaptive immunity. Regulates the circadian clock by inhibiting the basal and circadian expression of the core circadian component PER1. Inhibits PER1 by repressing the CLOCK-BMAL1 heterodimer mediated transcriptional activation of PER1. The heterodimer ARNT:AHR binds to core DNA sequence 5'-TGCGTG-3' within the dioxin response element (DRE) of target gene promoters and activates their transcription. The polypeptide is Aryl hydrocarbon receptor (Ahr) (Mus spicilegus (Steppe mouse)).